The primary structure comprises 141 residues: Large ribosomal subunit protein uL11 (141 aa).

This sequence belongs to the universal ribosomal protein uL11 family. As to quaternary structure, part of the ribosomal stalk of the 50S ribosomal subunit. Interacts with L10 and the large rRNA to form the base of the stalk. L10 forms an elongated spine to which L12 dimers bind in a sequential fashion forming a multimeric L10(L12)X complex. In terms of processing, one or more lysine residues are methylated.

Forms part of the ribosomal stalk which helps the ribosome interact with GTP-bound translation factors. The polypeptide is Large ribosomal subunit protein uL11 (Phytoplasma australiense).